The chain runs to 1164 residues: Phospholipid-transporting ATPase IA (1164 aa).

The Cytoplasmic portion of the chain corresponds to 1–65 (MPTMRRTVSE…TAKYNIITFL (65 aa)). Residue S25 is modified to Phosphoserine. Position 28 is a phosphothreonine (T28). S29 carries the phosphoserine modification. A helical membrane pass occupies residues 66–86 (PRFLYSQFRRAANSFFLFIAL). Over 87–92 (LQQIPD) the chain is Exoplasmic loop. Residues 93–115 (VSPTGRYTTLVPLLFILAVAAIK) traverse the membrane as a helical segment. Residues 116–297 (EIIEDIKRHK…SNVERITNVQ (182 aa)) are Cytoplasmic-facing. Residues 298–319 (ILILFCILIAMSLVCSVGSAIW) form a helical membrane-spanning segment. Residues 320–344 (NRRHSGKDWYLNLNYGGASNFGLNF) lie on the Exoplasmic loop side of the membrane. The helical transmembrane segment at 345–366 (LTFIILFNNLIPISLLVTLEVV) threads the bilayer. Residues 367–857 (KFTQAYFINW…GAWNYNRVSK (491 aa)) are Cytoplasmic-facing. D409 acts as the 4-aspartylphosphate intermediate in catalysis. Residues D409, K410, and T411 each coordinate ATP. D409 is a binding site for Mg(2+). T411 provides a ligand contact to Mg(2+). At S443 the chain carries Phosphoserine. Residues E508, F549, K572, R605, T685, G686, D687, 741–748 (ALIIDGKT), R775, and K781 contribute to the ATP site. D801 contributes to the Mg(2+) binding site. ATP-binding residues include N804 and D805. Residue D805 coordinates Mg(2+). The chain crosses the membrane as a helical span at residues 858–878 (CILYCFYKNIVLYIIEIWFAF). Residues 879–890 (VNGFSGQILFER) lie on the Exoplasmic loop side of the membrane. The chain crosses the membrane as a helical span at residues 891–910 (WCIGLYNVMFTAMPPLTLGI). The Cytoplasmic portion of the chain corresponds to 911 to 940 (FERSCRKENMLKYPELYKTSQNALDFNTKV). A helical transmembrane segment spans residues 941–962 (FWVHCLNGLFHSVILFWFPLKA). Residues 963 to 976 (LQYGTAFGNGKTSD) are Exoplasmic loop-facing. The helical transmembrane segment at 977-999 (YLLLGNFVYTFVVITVCLKAGLE) threads the bilayer. Topologically, residues 1000–1005 (TSYWTW) are cytoplasmic. Residues 1006 to 1026 (FSHIAIWGSIALWVVFFGIYS) traverse the membrane as a helical segment. Over 1027 to 1044 (SLWPAIPMAPDMSGEAAM) the chain is Exoplasmic loop. A helical membrane pass occupies residues 1045–1070 (LFSSGVFWMGLLFIPVASLLLDVVYK). At 1071-1164 (VIKRTAFKTL…DTTKQRPDEW (94 aa)) the chain is on the cytoplasmic side. 1095–1102 (GAVVLGKS) is an ATP binding site. S1126 is modified (phosphoserine).

Belongs to the cation transport ATPase (P-type) (TC 3.A.3) family. Type IV subfamily. In terms of assembly, component of a P4-ATPase flippase complex which consists of a catalytic alpha subunit and an accessory beta subunit. Interacts with TMEM30A to form a flippase complex; this complex forms an intermediate phosphoenzyme. Interacts with TMEM30B; this interaction is reported conflictingly. It depends on Mg(2+) as a cofactor. Post-translationally, cleaved by calpain in a caspase- and calcium influx-dependent manner during platelet apoptosis leading to a 100 kDa polypeptide. As to expression, found in most adult tissues except liver, testis and placenta. Most abundant in heart, brain and skeletal muscle. Also detected in fetal tissues. Isoform 1 is only detected in brain, skeletal muscle and heart and is the most abundant form in skeletal muscle. Highly expressed in platelets.

Its subcellular location is the cytoplasmic vesicle. The protein resides in the secretory vesicle. It localises to the chromaffin granule membrane. It is found in the cytoplasmic granule. The protein localises to the cell membrane. Its subcellular location is the endoplasmic reticulum. The protein resides in the golgi apparatus. The catalysed reaction is ATP + H2O + phospholipidSide 1 = ADP + phosphate + phospholipidSide 2.. It carries out the reaction a 1,2-diacyl-sn-glycero-3-phospho-L-serine(out) + ATP + H2O = a 1,2-diacyl-sn-glycero-3-phospho-L-serine(in) + ADP + phosphate + H(+). Its activity is regulated as follows. ATPase activity is stimulated by phosphatidylserine (PS) and minimally by phosphatidylethanolamine (PE). ATPase activity is inhibited by beryllium fluoride and aluminum trifluoride. In terms of biological role, catalytic component of a P4-ATPase flippase complex which catalyzes the hydrolysis of ATP coupled to the transport of aminophospholipids from the outer to the inner leaflet of various membranes and ensures the maintenance of asymmetric distribution of phospholipids. Phospholipid translocation also seems to be implicated in vesicle formation and in uptake of lipid signaling molecules. In vitro, its ATPase activity is selectively and stereospecifically stimulated by phosphatidylserine (PS). The flippase complex ATP8A1:TMEM30A seems to play a role in regulation of cell migration probably involving flippase-mediated translocation of phosphatidylethanolamine (PE) at the cell membrane. Acts as aminophospholipid translocase at the cell membrane in neuronal cells. This is Phospholipid-transporting ATPase IA from Homo sapiens (Human).